A 468-amino-acid chain; its full sequence is Cysteine--tRNA ligase (468 aa).

Cysteine 33 contributes to the Zn(2+) binding site. The short motif at 35–45 (ATVQGLPHIGH) is the 'HIGH' region element. The Zn(2+) site is built by cysteine 211, histidine 236, and glutamate 240. A 'KMSKS' region motif is present at residues 267–271 (KMSKS). Lysine 270 serves as a coordination point for ATP.

The protein belongs to the class-I aminoacyl-tRNA synthetase family. As to quaternary structure, monomer. Requires Zn(2+) as cofactor.

The protein localises to the cytoplasm. The catalysed reaction is tRNA(Cys) + L-cysteine + ATP = L-cysteinyl-tRNA(Cys) + AMP + diphosphate. The protein is Cysteine--tRNA ligase of Mycobacterium marinum (strain ATCC BAA-535 / M).